The chain runs to 273 residues: 2,3,4,5-tetrahydropyridine-2,6-dicarboxylate N-succinyltransferase (273 aa).

Substrate-binding residues include Arg104 and Asp141.

This sequence belongs to the transferase hexapeptide repeat family. In terms of assembly, homotrimer.

The protein resides in the cytoplasm. It catalyses the reaction (S)-2,3,4,5-tetrahydrodipicolinate + succinyl-CoA + H2O = (S)-2-succinylamino-6-oxoheptanedioate + CoA. It participates in amino-acid biosynthesis; L-lysine biosynthesis via DAP pathway; LL-2,6-diaminopimelate from (S)-tetrahydrodipicolinate (succinylase route): step 1/3. The polypeptide is 2,3,4,5-tetrahydropyridine-2,6-dicarboxylate N-succinyltransferase (Psychrobacter sp. (strain PRwf-1)).